Reading from the N-terminus, the 425-residue chain is 5-methylthioadenosine/S-adenosylhomocysteine deaminase (425 aa).

Zn(2+)-binding residues include H63 and H65. Residues E92 and H184 each contribute to the substrate site. H211 is a binding site for Zn(2+). Residues E214 and D299 each contribute to the substrate site. D299 provides a ligand contact to Zn(2+).

Belongs to the metallo-dependent hydrolases superfamily. MTA/SAH deaminase family. Zn(2+) serves as cofactor.

It carries out the reaction S-adenosyl-L-homocysteine + H2O + H(+) = S-inosyl-L-homocysteine + NH4(+). The catalysed reaction is S-methyl-5'-thioadenosine + H2O + H(+) = S-methyl-5'-thioinosine + NH4(+). In terms of biological role, catalyzes the deamination of 5-methylthioadenosine and S-adenosyl-L-homocysteine into 5-methylthioinosine and S-inosyl-L-homocysteine, respectively. Is also able to deaminate adenosine. The sequence is that of 5-methylthioadenosine/S-adenosylhomocysteine deaminase from Pyrococcus abyssi (strain GE5 / Orsay).